A 146-amino-acid polypeptide reads, in one-letter code: uncharacterized protein (146 aa).

Residues 1-137 (MLSQEFFNSF…TINVMNQIHK (137 aa)) form the HTH marR-type domain.

This is an uncharacterized protein from Staphylococcus aureus (strain MW2).